The chain runs to 316 residues: Cobalamin biosynthesis protein CobD (316 aa).

5 helical membrane-spanning segments follow: residues 45–65, 78–100, 151–171, 209–229, and 291–311; these read FSPY…ALGV, PVLY…SLAF, DGVI…AMTY, LTWL…KGAL, and ISLL…FYLV.

This sequence belongs to the CobD/CbiB family.

The protein localises to the cell membrane. The protein operates within cofactor biosynthesis; adenosylcobalamin biosynthesis. Its function is as follows. Converts cobyric acid to cobinamide by the addition of aminopropanol on the F carboxylic group. This Streptococcus sanguinis (strain SK36) protein is Cobalamin biosynthesis protein CobD.